Reading from the N-terminus, the 154-residue chain is Protein X (154 aa).

The mitochondrial targeting sequence stretch occupies residues 68–117 (PCALRFTSARRMETTVNAHRNLPKVLHKRTLGLSAMSTTDLEAYFKDCVF).

It belongs to the orthohepadnavirus protein X family. As to quaternary structure, may form homodimer. May interact with host CEBPA, CFLAR, CREB1, DDB1, E4F1, HBXIP, HSPD1/HSP60, NFKBIA, POLR2E and SMAD4. Interacts with host SMC5-SMC6 complex and induces its degradation. Interacts with host TRPC4AP; leading to prevent ubiquitination of TRPC4AP. Interacts with host PLSCR1; this interaction promotes ubiquitination and degradation of HBx and impairs HBx-mediated cell proliferation. A fraction may be phosphorylated in insect cells and HepG2 cells, a human hepatoblastoma cell line. Phosphorylated in vitro by host protein kinase C or mitogen-activated protein kinase. N-acetylated in insect cells.

Its subcellular location is the host cytoplasm. It is found in the host nucleus. The protein resides in the host mitochondrion. Its function is as follows. Multifunctional protein that plays a role in silencing host antiviral defenses and promoting viral transcription. Does not seem to be essential for HBV infection. May be directly involved in development of cirrhosis and liver cancer (hepatocellular carcinoma). Most of cytosolic activities involve modulation of cytosolic calcium. The effect on apoptosis is controversial depending on the cell types in which the studies have been conducted. May induce apoptosis by localizing in mitochondria and causing loss of mitochondrial membrane potential. May also modulate apoptosis by binding host CFLAR, a key regulator of the death-inducing signaling complex (DISC). Promotes viral transcription by using the host E3 ubiquitin ligase DDB1 to target the SMC5-SMC6 complex to proteasomal degradation. This host complex would otherwise bind to viral episomal DNA, and prevents its transcription. Moderately stimulates transcription of many different viral and cellular transcription elements. Promoters and enhancers stimulated by HBx contain DNA binding sites for NF-kappa-B, AP-1, AP-2, c-EBP, ATF/CREB, or the calcium-activated factor NF-AT. This chain is Protein X, found in Hepatitis B virus genotype B1 subtype adw (isolate Japan/pJDW233/1988) (HBV-B).